Here is a 31-residue protein sequence, read N- to C-terminus: MEALVYTFLLVTTLGILFFSIIFRDPPRINQ.

A helical transmembrane segment spans residues 3–23 (ALVYTFLLVTTLGILFFSIIF).

This sequence belongs to the PsbT family. As to quaternary structure, PSII is composed of 1 copy each of membrane proteins PsbA, PsbB, PsbC, PsbD, PsbE, PsbF, PsbH, PsbI, PsbJ, PsbK, PsbL, PsbM, PsbT, PsbX, PsbY, PsbZ, Psb30/Ycf12, at least 3 peripheral proteins of the oxygen-evolving complex and a large number of cofactors. It forms dimeric complexes.

It localises to the plastid. Its subcellular location is the cyanelle thylakoid membrane. Its function is as follows. Found at the monomer-monomer interface of the photosystem II (PS II) dimer, plays a role in assembly and dimerization of PSII. PSII is a light-driven water plastoquinone oxidoreductase, using light energy to abstract electrons from H(2)O, generating a proton gradient subsequently used for ATP formation. The protein is Photosystem II reaction center protein T of Cyanophora paradoxa.